A 354-amino-acid chain; its full sequence is Serine/threonine-protein kinase-transforming protein mos (354 aa).

One can recognise a Protein kinase domain in the interval 74 to 350; the sequence is VCLMHRLGSG…LLQRDLKAFR (277 aa). ATP-binding positions include 80-88 and K101; that span reads LGSGGFGSV. Residue D209 is the Proton acceptor of the active site.

The protein belongs to the protein kinase superfamily. Ser/Thr protein kinase family.

It carries out the reaction L-seryl-[protein] + ATP = O-phospho-L-seryl-[protein] + ADP + H(+). The enzyme catalyses L-threonyl-[protein] + ATP = O-phospho-L-threonyl-[protein] + ADP + H(+). The polypeptide is Serine/threonine-protein kinase-transforming protein mos (V-MOS) (Moloney murine sarcoma virus (strain ts110) (MoMSV)).